We begin with the raw amino-acid sequence, 344 residues long: Protein pelota homolog (344 aa).

This sequence belongs to the eukaryotic release factor 1 family. Pelota subfamily. In terms of assembly, monomer. Requires a divalent metal cation as cofactor.

The protein localises to the cytoplasm. In terms of biological role, may function in recognizing stalled ribosomes, interact with stem-loop structures in stalled mRNA molecules, and effect endonucleolytic cleavage of the mRNA. May play a role in the release non-functional ribosomes and degradation of damaged mRNAs. Has endoribonuclease activity. This Saccharolobus islandicus (strain Y.N.15.51 / Yellowstone #2) (Sulfolobus islandicus) protein is Protein pelota homolog.